We begin with the raw amino-acid sequence, 310 residues long: tRNA pseudouridine synthase B (310 aa).

Residue aspartate 47 is the Nucleophile of the active site.

This sequence belongs to the pseudouridine synthase TruB family. Type 1 subfamily.

It carries out the reaction uridine(55) in tRNA = pseudouridine(55) in tRNA. Functionally, responsible for synthesis of pseudouridine from uracil-55 in the psi GC loop of transfer RNAs. In Caulobacter sp. (strain K31), this protein is tRNA pseudouridine synthase B.